The chain runs to 287 residues: Acetylglutamate kinase (287 aa).

Substrate-binding positions include 64 to 65, Arg86, and Asn185; that span reads GG.

It belongs to the acetylglutamate kinase family. ArgB subfamily.

The protein localises to the cytoplasm. It carries out the reaction N-acetyl-L-glutamate + ATP = N-acetyl-L-glutamyl 5-phosphate + ADP. It participates in amino-acid biosynthesis; L-arginine biosynthesis; N(2)-acetyl-L-ornithine from L-glutamate: step 2/4. In terms of biological role, catalyzes the ATP-dependent phosphorylation of N-acetyl-L-glutamate. In Hydrogenobaculum sp. (strain Y04AAS1), this protein is Acetylglutamate kinase.